The primary structure comprises 313 residues: Ribosomal RNA small subunit methyltransferase H (313 aa).

Residues 33-35 (AGH), Asp-53, Phe-82, Asp-103, and Gln-110 contribute to the S-adenosyl-L-methionine site.

Belongs to the methyltransferase superfamily. RsmH family.

The protein resides in the cytoplasm. The enzyme catalyses cytidine(1402) in 16S rRNA + S-adenosyl-L-methionine = N(4)-methylcytidine(1402) in 16S rRNA + S-adenosyl-L-homocysteine + H(+). Its function is as follows. Specifically methylates the N4 position of cytidine in position 1402 (C1402) of 16S rRNA. The sequence is that of Ribosomal RNA small subunit methyltransferase H from Ruminiclostridium cellulolyticum (strain ATCC 35319 / DSM 5812 / JCM 6584 / H10) (Clostridium cellulolyticum).